We begin with the raw amino-acid sequence, 488 residues long: Bifunctional protein HldE (488 aa).

Positions 1-330 (MIDFDGLSNA…RNILPPASLA (330 aa)) are ribokinase. Residue 205–208 (NSKE) participates in ATP binding. The active site involves Asp-275. Residues 358–488 (FTNGCFDILH…TSLVKRAGGA (131 aa)) form a cytidylyltransferase region.

The protein in the N-terminal section; belongs to the carbohydrate kinase PfkB family. This sequence in the C-terminal section; belongs to the cytidylyltransferase family. In terms of assembly, homodimer.

The catalysed reaction is D-glycero-beta-D-manno-heptose 7-phosphate + ATP = D-glycero-beta-D-manno-heptose 1,7-bisphosphate + ADP + H(+). It catalyses the reaction D-glycero-beta-D-manno-heptose 1-phosphate + ATP + H(+) = ADP-D-glycero-beta-D-manno-heptose + diphosphate. It participates in nucleotide-sugar biosynthesis; ADP-L-glycero-beta-D-manno-heptose biosynthesis; ADP-L-glycero-beta-D-manno-heptose from D-glycero-beta-D-manno-heptose 7-phosphate: step 1/4. The protein operates within nucleotide-sugar biosynthesis; ADP-L-glycero-beta-D-manno-heptose biosynthesis; ADP-L-glycero-beta-D-manno-heptose from D-glycero-beta-D-manno-heptose 7-phosphate: step 3/4. In terms of biological role, catalyzes the phosphorylation of D-glycero-D-manno-heptose 7-phosphate at the C-1 position to selectively form D-glycero-beta-D-manno-heptose-1,7-bisphosphate. Catalyzes the ADP transfer from ATP to D-glycero-beta-D-manno-heptose 1-phosphate, yielding ADP-D-glycero-beta-D-manno-heptose. The chain is Bifunctional protein HldE from Nitrobacter winogradskyi (strain ATCC 25391 / DSM 10237 / CIP 104748 / NCIMB 11846 / Nb-255).